A 623-amino-acid polypeptide reads, in one-letter code: Alpha-1,2-mannosyltransferase Alg9 (623 aa).

Helical transmembrane passes span 152 to 172 (LIFY…ERYM), 193 to 223 (LFSV…AAWW), 229 to 254 (FAIF…PLVL), 266 to 284 (FVQW…MIAI), 326 to 348 (FLNF…IDYL), 360 to 378 (FPHY…VFFA), 390 to 410 (IYPL…RIFF), and 431 to 452 (FIAI…FALY).

Belongs to the glycosyltransferase 22 family.

Its subcellular location is the endoplasmic reticulum membrane. It catalyses the reaction an alpha-D-Man-(1-&gt;2)-alpha-D-Man-(1-&gt;2)-alpha-D-Man-(1-&gt;3)-[alpha-D-Man-(1-&gt;3)-alpha-D-Man-(1-&gt;6)]-beta-D-Man-(1-&gt;4)-beta-D-GlcNAc-(1-&gt;4)-alpha-D-GlcNAc-diphospho-di-trans,poly-cis-dolichol + a di-trans,poly-cis-dolichyl beta-D-mannosyl phosphate = an alpha-D-Man-(1-&gt;2)-alpha-D-Man-(1-&gt;2)-alpha-D-Man-(1-&gt;3)-[alpha-D-Man-(1-&gt;2)-alpha-D-Man-(1-&gt;3)-alpha-D-Man-(1-&gt;6)]-beta-D-Man-(1-&gt;4)-beta-D-GlcNAc-(1-&gt;4)-alpha-D-GlcNAc-diphospho-di-trans,poly-cis-dolichol + a di-trans,poly-cis-dolichyl phosphate + H(+). It carries out the reaction an alpha-D-Man-(1-&gt;2)-alpha-D-Man-(1-&gt;2)-alpha-D-Man-(1-&gt;3)-[alpha-D-Man-(1-&gt;2)-alpha-D-Man-(1-&gt;3)-[alpha-D-Man-(1-&gt;6)]-alpha-D-Man-(1-&gt;6)]-beta-D-Man-(1-&gt;4)-beta-D-GlcNAc-(1-&gt;4)-alpha-D-GlcNAc-diphospho-di-trans,poly-cis-dolichol + a di-trans,poly-cis-dolichyl beta-D-mannosyl phosphate = an alpha-D-Man-(1-&gt;2)-alpha-D-Man-(1-&gt;2)-alpha-D-Man-(1-&gt;3)-[alpha-D-Man-(1-&gt;2)-alpha-D-Man-(1-&gt;3)-[alpha-D-Man-(1-&gt;2)-alpha-D-Man-(1-&gt;6)]-alpha-D-Man-(1-&gt;6)]-beta-D-Man-(1-&gt;4)-beta-D-GlcNAc-(1-&gt;4)-alpha-D-GlcNAc-diphospho-di-trans,poly-cis-dolichol + a di-trans,poly-cis-dolichyl phosphate + H(+). The protein operates within protein modification; protein glycosylation. Functionally, probable alpha-1,2-mannosyltransferase involved in the N-glycosylation pathway. Probably involved in glycosylation of the TNF receptor grnd, regulating its ligand affinity. Required for normal epithelial growth and architecture. Suppressor of JNK-dependent intestinal stem cell proliferation. This is Alpha-1,2-mannosyltransferase Alg9 from Drosophila melanogaster (Fruit fly).